We begin with the raw amino-acid sequence, 436 residues long: GTPase Der (436 aa).

2 consecutive EngA-type G domains span residues 3–168 and 177–352; these read PLVA…EEKS and IRLA…EQRS. GTP-binding positions include 9–16, 56–60, 120–123, 183–190, 230–234, and 295–298; these read GRPNVGKS, DTGGY, NKVE, DTAGL, and NKWD. The KH-like domain maps to 353 to 436; the sequence is QQITTSDLNR…VPFSLRFMQK (84 aa).

The protein belongs to the TRAFAC class TrmE-Era-EngA-EngB-Septin-like GTPase superfamily. EngA (Der) GTPase family. In terms of assembly, associates with the 50S ribosomal subunit.

Its function is as follows. GTPase that plays an essential role in the late steps of ribosome biogenesis. The protein is GTPase Der of Prosthecochloris aestuarii (strain DSM 271 / SK 413).